Here is a 106-residue protein sequence, read N- to C-terminus: DNA-directed RNA polymerase subunit Rpo6 (106 aa).

The protein belongs to the archaeal Rpo6/eukaryotic RPB6 RNA polymerase subunit family. As to quaternary structure, part of the RNA polymerase complex.

It is found in the cytoplasm. It carries out the reaction RNA(n) + a ribonucleoside 5'-triphosphate = RNA(n+1) + diphosphate. DNA-dependent RNA polymerase (RNAP) catalyzes the transcription of DNA into RNA using the four ribonucleoside triphosphates as substrates. This Pyrobaculum aerophilum (strain ATCC 51768 / DSM 7523 / JCM 9630 / CIP 104966 / NBRC 100827 / IM2) protein is DNA-directed RNA polymerase subunit Rpo6.